Here is a 624-residue protein sequence, read N- to C-terminus: 1-deoxy-D-xylulose-5-phosphate synthase (624 aa).

Thiamine diphosphate-binding positions include His80 and 121 to 123; that span reads GHS. Asp152 is a binding site for Mg(2+). Thiamine diphosphate-binding positions include 153-154, Asn181, Tyr288, and Glu370; that span reads GA. Asn181 lines the Mg(2+) pocket.

It belongs to the transketolase family. DXPS subfamily. In terms of assembly, homodimer. Mg(2+) is required as a cofactor. Thiamine diphosphate serves as cofactor.

It catalyses the reaction D-glyceraldehyde 3-phosphate + pyruvate + H(+) = 1-deoxy-D-xylulose 5-phosphate + CO2. Its pathway is metabolic intermediate biosynthesis; 1-deoxy-D-xylulose 5-phosphate biosynthesis; 1-deoxy-D-xylulose 5-phosphate from D-glyceraldehyde 3-phosphate and pyruvate: step 1/1. In terms of biological role, catalyzes the acyloin condensation reaction between C atoms 2 and 3 of pyruvate and glyceraldehyde 3-phosphate to yield 1-deoxy-D-xylulose-5-phosphate (DXP). This Proteus mirabilis (strain HI4320) protein is 1-deoxy-D-xylulose-5-phosphate synthase.